The primary structure comprises 615 residues: 1-deoxy-D-xylulose-5-phosphate synthase (615 aa).

Residues His72 and 113 to 115 (GHA) each bind thiamine diphosphate. Asp144 serves as a coordination point for Mg(2+). Thiamine diphosphate contacts are provided by residues 145 to 146 (GA), Asn173, Tyr281, and Glu360. Asn173 serves as a coordination point for Mg(2+).

This sequence belongs to the transketolase family. DXPS subfamily. As to quaternary structure, homodimer. Mg(2+) is required as a cofactor. Requires thiamine diphosphate as cofactor.

It carries out the reaction D-glyceraldehyde 3-phosphate + pyruvate + H(+) = 1-deoxy-D-xylulose 5-phosphate + CO2. It functions in the pathway metabolic intermediate biosynthesis; 1-deoxy-D-xylulose 5-phosphate biosynthesis; 1-deoxy-D-xylulose 5-phosphate from D-glyceraldehyde 3-phosphate and pyruvate: step 1/1. In terms of biological role, catalyzes the acyloin condensation reaction between C atoms 2 and 3 of pyruvate and glyceraldehyde 3-phosphate to yield 1-deoxy-D-xylulose-5-phosphate (DXP). The polypeptide is 1-deoxy-D-xylulose-5-phosphate synthase (Thermus thermophilus (strain ATCC 27634 / DSM 579 / HB8)).